The chain runs to 223 residues: Ubiquinone biosynthesis protein COQ4 homolog 2, mitochondrial (223 aa).

The N-terminal 26 residues, 1 to 26, are a transit peptide targeting the mitochondrion; the sequence is MFLRRVHPVRLGHAIQRSLTTTKSRN. Over residues 21–32 the composition is skewed to low complexity; it reads TTKSRNESTTTT. The segment at 21 to 43 is disordered; sequence TTKSRNESTTTTVEAPQAVPSPP. Zn(2+)-binding residues include histidine 177, aspartate 178, histidine 181, and glutamate 193.

This sequence belongs to the COQ4 family. As to quaternary structure, component of a multi-subunit COQ enzyme complex. Zn(2+) is required as a cofactor.

It is found in the mitochondrion inner membrane. It catalyses the reaction a 4-hydroxy-3-methoxy-5-(all-trans-polyprenyl)benzoate + H(+) = a 2-methoxy-6-(all-trans-polyprenyl)phenol + CO2. Its pathway is cofactor biosynthesis; ubiquinone biosynthesis. Its function is as follows. Lyase that catalyzes the C1-decarboxylation of 4-hydroxy-3-methoxy-5-(all-trans-polyprenyl)benzoic acid into 2-methoxy-6-(all-trans-polyprenyl)phenol during ubiquinone biosynthesis. In Culex quinquefasciatus (Southern house mosquito), this protein is Ubiquinone biosynthesis protein COQ4 homolog 2, mitochondrial.